Here is a 748-residue protein sequence, read N- to C-terminus: Formate acetyltransferase (748 aa).

A PFL domain is found at 5 to 618 (NNHTNAWQGF…KTGNTPDGRK (614 aa)). C412 (S-acetylcysteine intermediate) is an active-site residue. C413 (cysteine radical intermediate) is an active-site residue. The Glycine radical domain maps to 625-748 (PGANPMHGRD…VISRTFHESM (124 aa)). G723 bears the Glycine radical mark.

It belongs to the glycyl radical enzyme (GRE) family. PFL subfamily. In terms of assembly, homodimer.

Its subcellular location is the cytoplasm. It carries out the reaction formate + acetyl-CoA = pyruvate + CoA. Its pathway is fermentation; pyruvate fermentation; formate from pyruvate: step 1/1. In terms of biological role, catalyzes the conversion of pyruvate to formate and acetyl-CoA. In Staphylococcus epidermidis (strain ATCC 35984 / DSM 28319 / BCRC 17069 / CCUG 31568 / BM 3577 / RP62A), this protein is Formate acetyltransferase (pflB).